Here is a 291-residue protein sequence, read N- to C-terminus: uncharacterized protein (291 aa).

A disordered region spans residues 1–82 (MEAEKETEQE…SYSSSPFETH (82 aa)). Low complexity-rich tracts occupy residues 28-43 (HSHSMSSPIHSSISAS) and 59-78 (STSSSSSSSSSPLTSYSSSP).

This is an uncharacterized protein from Arabidopsis thaliana (Mouse-ear cress).